A 469-amino-acid polypeptide reads, in one-letter code: Argininosuccinate lyase (469 aa).

The protein belongs to the lyase 1 family. Argininosuccinate lyase subfamily.

Its subcellular location is the cytoplasm. It carries out the reaction 2-(N(omega)-L-arginino)succinate = fumarate + L-arginine. It functions in the pathway amino-acid biosynthesis; L-arginine biosynthesis; L-arginine from L-ornithine and carbamoyl phosphate: step 3/3. In Paracoccus denitrificans (strain Pd 1222), this protein is Argininosuccinate lyase.